The primary structure comprises 411 residues: F-box/kelch-repeat protein At3g61590 (411 aa).

Residues 37–83 (FSMDSLLPDDLLERILSFLPIASIFRAGTVCKRWNEIVSSRRFLCNF) enclose the F-box domain. Kelch repeat units follow at residues 81–135 (CNFS…SSCG), 137–178 (VCFM…MSTS), 196–246 (SIVK…ICNN), 251–299 (MIYS…LMNL), 302–350 (RLVI…EFDE), and 352–401 (FASS…FTGF).

Part of a SCF (ASK-cullin-F-box) protein ligase complex. Interacts with SKP1A/ASK1, SKP1B/ASK2, ASK3, ASK9, ASK11, ASK12, ASK13, ASK14, ASK16 and ASK18.

It functions in the pathway protein modification; protein ubiquitination. Functionally, component of SCF(ASK-cullin-F-box) E3 ubiquitin ligase complexes, which may mediate the ubiquitination and subsequent proteasomal degradation of target proteins. This is F-box/kelch-repeat protein At3g61590 from Arabidopsis thaliana (Mouse-ear cress).